We begin with the raw amino-acid sequence, 264 residues long: Small ribosomal subunit protein uS2 (264 aa).

The tract at residues Ala233–Glu264 is disordered.

Belongs to the universal ribosomal protein uS2 family.

The chain is Small ribosomal subunit protein uS2 from Psychrobacter arcticus (strain DSM 17307 / VKM B-2377 / 273-4).